The sequence spans 204 residues: Probable 5-formyltetrahydrofolate cyclo-ligase (204 aa).

5-9 (KNQLR) serves as a coordination point for ATP. Substrate-binding positions include Glu57, Trp102, and 140-144 (HGKGY). ATP-binding positions include 139-146 (GHGKGYYD) and Asp188.

The protein belongs to the 5-formyltetrahydrofolate cyclo-ligase family.

The catalysed reaction is (6S)-5-formyl-5,6,7,8-tetrahydrofolate + ATP = (6R)-5,10-methenyltetrahydrofolate + ADP + phosphate. The protein is Probable 5-formyltetrahydrofolate cyclo-ligase of Schizosaccharomyces pombe (strain 972 / ATCC 24843) (Fission yeast).